A 447-amino-acid polypeptide reads, in one-letter code: GTPase Der (447 aa).

2 consecutive EngA-type G domains span residues 4-165 and 180-357; these read KIIT…PEEE and LQIV…KIWN. Residues 10–17, 57–61, 119–122, 186–193, 233–237, and 298–301 contribute to the GTP site; these read GRPNVGKS, DTPGL, NKCE, GRPNAGKS, DTAGL, and NKWD. The 86-residue stretch at 358–443 folds into the KH-like domain; it reads KKITTSKLNE…PIRFTYVKTK (86 aa).

The protein belongs to the TRAFAC class TrmE-Era-EngA-EngB-Septin-like GTPase superfamily. EngA (Der) GTPase family. As to quaternary structure, associates with the 50S ribosomal subunit.

Its function is as follows. GTPase that plays an essential role in the late steps of ribosome biogenesis. This is GTPase Der from Rickettsia felis (strain ATCC VR-1525 / URRWXCal2) (Rickettsia azadi).